Here is a 215-residue protein sequence, read N- to C-terminus: 3-demethoxyubiquinol 3-hydroxylase (215 aa).

Positions 64, 94, 97, 146, 178, and 181 each coordinate Fe cation.

It belongs to the COQ7 family. Fe cation is required as a cofactor.

The protein localises to the cell membrane. The catalysed reaction is a 5-methoxy-2-methyl-3-(all-trans-polyprenyl)benzene-1,4-diol + AH2 + O2 = a 3-demethylubiquinol + A + H2O. It participates in cofactor biosynthesis; ubiquinone biosynthesis. In terms of biological role, catalyzes the hydroxylation of 2-nonaprenyl-3-methyl-6-methoxy-1,4-benzoquinol during ubiquinone biosynthesis. The protein is 3-demethoxyubiquinol 3-hydroxylase of Pseudomonas aeruginosa (strain LESB58).